Reading from the N-terminus, the 249-residue chain is Coproheme decarboxylase (249 aa).

Fe-coproporphyrin III is bound by residues Arg-131, 145 to 149, His-172, and Gln-185; that span reads YPMNK. Tyr-145 is an active-site residue.

The protein belongs to the ChdC family. Type 1 subfamily. It depends on Fe-coproporphyrin III as a cofactor.

The catalysed reaction is Fe-coproporphyrin III + 2 H2O2 + 2 H(+) = heme b + 2 CO2 + 4 H2O. It catalyses the reaction Fe-coproporphyrin III + H2O2 + H(+) = harderoheme III + CO2 + 2 H2O. The enzyme catalyses harderoheme III + H2O2 + H(+) = heme b + CO2 + 2 H2O. It functions in the pathway porphyrin-containing compound metabolism; protoheme biosynthesis. Involved in coproporphyrin-dependent heme b biosynthesis. Catalyzes the decarboxylation of Fe-coproporphyrin III (coproheme) to heme b (protoheme IX), the last step of the pathway. The reaction occurs in a stepwise manner with a three-propionate intermediate. The polypeptide is Coproheme decarboxylase (Staphylococcus carnosus (strain TM300)).